A 138-amino-acid polypeptide reads, in one-letter code: Ribulose bisphosphate carboxylase small subunit (138 aa).

It belongs to the RuBisCO small chain family. As to quaternary structure, heterohexadecamer of 8 large and 8 small subunits.

The protein resides in the plastid. It is found in the chloroplast. Its function is as follows. RuBisCO catalyzes two reactions: the carboxylation of D-ribulose 1,5-bisphosphate, the primary event in carbon dioxide fixation, as well as the oxidative fragmentation of the pentose substrate in the photorespiration process. Both reactions occur simultaneously and in competition at the same active site. Although the small subunit is not catalytic it is essential for maximal activity. The chain is Ribulose bisphosphate carboxylase small subunit from Pyropia katadae (Red alga).